The sequence spans 502 residues: Xylulose kinase (502 aa).

82-83 (MH) contacts substrate. Catalysis depends on Asp-240, which acts as the Proton acceptor.

Belongs to the FGGY kinase family.

The catalysed reaction is D-xylulose + ATP = D-xylulose 5-phosphate + ADP + H(+). Catalyzes the phosphorylation of D-xylulose to D-xylulose 5-phosphate. This is Xylulose kinase from Levilactobacillus brevis (Lactobacillus brevis).